A 168-amino-acid chain; its full sequence is uncharacterized protein (168 aa).

3 disordered regions span residues 1–35 (MGSS…KKLD), 48–97 (KVKK…DKGN), and 126–168 (ASIT…GLGM). The stretch at 29-95 (KEKKKLDEKE…KNSLSRSQDK (67 aa)) forms a coiled coil. Residues 68–85 (LAEDPMVKNVAENDHDQM) are compositionally biased toward basic and acidic residues. The span at 126–139 (ASITESSPSAQSNK) shows a compositional bias: polar residues. Basic and acidic residues predominate over residues 140 to 150 (TNDKQREKELE). Residues 157-168 (VLHKGTKKGLGM) show a composition bias toward basic residues.

This is an uncharacterized protein from Schizosaccharomyces pombe (strain 972 / ATCC 24843) (Fission yeast).